The primary structure comprises 1180 residues: RecBCD enzyme subunit RecB (1180 aa).

One can recognise a UvrD-like helicase ATP-binding domain in the interval 2–450 (SDVAETLDPL…YTLDTNWRSA (449 aa)). Positions 2–853 (SDVAETLDPL…KGEPQDAAGL (852 aa)) are ATPase, DNA-binding and helicase activity, interacts with RecC. 23 to 30 (ASAGTGKT) is an ATP binding site. The DNA-binding element occupies 252 to 254 (IDR). Tryptophan 447 is an ATP binding site. Residues 480–746 (SAGKNQALRF…QIVTIHKSKG (267 aa)) form the UvrD-like helicase C-terminal domain. 3 consecutive DNA-binding regions follow at residues 511-512 (VG), 560-561 (SR), and arginine 761. Residues 900 to 1180 (NWRVTSYSGL…MFAGMTLEEA (281 aa)) are nuclease activity, interacts with RecD and RecA. Positions 956, 1067, 1080, and 1081 each coordinate Mg(2+). Residue aspartate 1080 is the For nuclease activity of the active site.

Belongs to the helicase family. UvrD subfamily. In terms of assembly, heterotrimer of RecB, RecC and RecD. All subunits contribute to DNA-binding. The C-terminus interacts with RecA. Interacts with YgbT (Cas1). As to quaternary structure, (Microbial infection) Lambda virus GamS protein interacts with the enzyme without displacing any of the subunits. Mg(2+) serves as cofactor.

The enzyme catalyses Exonucleolytic cleavage (in the presence of ATP) in either 5'- to 3'- or 3'- to 5'-direction to yield 5'-phosphooligonucleotides.. It carries out the reaction Couples ATP hydrolysis with the unwinding of duplex DNA by translocating in the 3'-5' direction.. It catalyses the reaction ATP + H2O = ADP + phosphate + H(+). After reacting with DNA bearing a Chi site the holoenzyme is disassembled and loses exonuclease activity, DNA unwinding and Chi-directed DNA cleavage; RecB remains complexed with ssDNA, which may prevent holoenzyme reassembly. High levels of Mg(2+) (13 mM MgCl(2+)) or incubation with DNase allows holoenzyme reassembly, suggesting it is DNA bound to RecB that prevents reassembly. With respect to regulation, (Microbial infection) RecBCD is inhibited by the lambda virus gam protein (both GamL and GamS isoforms); in vitro a short preincubation prior to adding DNA results in maximal inhibition. Functionally, a helicase/nuclease that prepares dsDNA breaks (DSB) for recombinational DNA repair. Binds to DSBs and unwinds DNA via a rapid (&gt;1 kb/second) and highly processive (&gt;30 kb) ATP-dependent bidirectional helicase. Unwinds dsDNA until it encounters a Chi (crossover hotspot instigator, 5'-GCTGGTGG-3') sequence from the 3' direction. Cuts ssDNA a few nucleotides 3' to Chi site, by nicking one strand or switching the strand degraded (depending on the reaction conditions). The properties and activities of the enzyme are changed at Chi. The Chi-altered holoenzyme produces a long 3'-ssDNA overhang which facilitates RecA-binding to the ssDNA for homologous DNA recombination and repair. Holoenzyme degrades any linearized DNA that is unable to undergo homologous recombination. In the holoenzyme this subunit contributes ATPase, 3'-5' helicase, exonuclease activity and loads RecA onto ssDNA. The RecBC complex requires the RecD subunit for nuclease activity, but can translocate along ssDNA in both directions. The RecBCD complex does not unwind G-quadruplex DNA. Probably interacts with a component of retron Ec48 which moniters RecBCD stability; when RecB is missing or impaired the retron is activated and becomes toxic. In Escherichia coli (strain K12), this protein is RecBCD enzyme subunit RecB.